Consider the following 878-residue polypeptide: Phosphoenolpyruvate carboxylase (878 aa).

Residues H140 and K545 contribute to the active site.

Belongs to the PEPCase type 1 family. Mg(2+) serves as cofactor.

It carries out the reaction oxaloacetate + phosphate = phosphoenolpyruvate + hydrogencarbonate. Forms oxaloacetate, a four-carbon dicarboxylic acid source for the tricarboxylic acid cycle. This Pseudomonas syringae pv. tomato (strain ATCC BAA-871 / DC3000) protein is Phosphoenolpyruvate carboxylase.